The sequence spans 287 residues: F420-non-reducing hydrogenase vhu subunit G (287 aa).

This sequence belongs to the [NiFe]/[NiFeSe] hydrogenase small subunit family. As to quaternary structure, the F420-non-reducing hydrogenase vhu is composed of four subunits; VhuA, VhuD, VhuG and VhuU.

This is F420-non-reducing hydrogenase vhu subunit G (vhuG) from Methanococcus voltae.